The following is a 120-amino-acid chain: Small ribosomal subunit protein uS13 (120 aa).

The interval 96–120 is disordered; sequence PCRGQRTRTNARTRKGPRKAIAGKK.

The protein belongs to the universal ribosomal protein uS13 family. As to quaternary structure, part of the 30S ribosomal subunit. Forms a loose heterodimer with protein S19. Forms two bridges to the 50S subunit in the 70S ribosome.

Functionally, located at the top of the head of the 30S subunit, it contacts several helices of the 16S rRNA. In the 70S ribosome it contacts the 23S rRNA (bridge B1a) and protein L5 of the 50S subunit (bridge B1b), connecting the 2 subunits; these bridges are implicated in subunit movement. Contacts the tRNAs in the A and P-sites. The polypeptide is Small ribosomal subunit protein uS13 (Neisseria gonorrhoeae (strain ATCC 700825 / FA 1090)).